A 334-amino-acid polypeptide reads, in one-letter code: Holliday junction branch migration complex subunit RuvB (334 aa).

A large ATPase domain (RuvB-L) region spans residues 4–184; that stretch reads ADRLIQPQLQ…FGIPLRLEFY (181 aa). ATP is bound by residues Arg24, Gly65, Lys68, Thr69, Thr70, 131–133, Arg174, Tyr184, and Arg221; that span reads EDY. Thr69 contributes to the Mg(2+) binding site. A small ATPAse domain (RuvB-S) region spans residues 185–255; it reads NVKDLSTIVT…VAELALNLLD (71 aa). The segment at 258–334 is head domain (RuvB-H); it reads GEGFDYMDRK…YVHFGMIKPE (77 aa). Positions 294, 313, and 318 each coordinate DNA.

The protein belongs to the RuvB family. Homohexamer. Forms an RuvA(8)-RuvB(12)-Holliday junction (HJ) complex. HJ DNA is sandwiched between 2 RuvA tetramers; dsDNA enters through RuvA and exits via RuvB. An RuvB hexamer assembles on each DNA strand where it exits the tetramer. Each RuvB hexamer is contacted by two RuvA subunits (via domain III) on 2 adjacent RuvB subunits; this complex drives branch migration. In the full resolvosome a probable DNA-RuvA(4)-RuvB(12)-RuvC(2) complex forms which resolves the HJ.

It localises to the cytoplasm. It catalyses the reaction ATP + H2O = ADP + phosphate + H(+). Its function is as follows. The RuvA-RuvB-RuvC complex processes Holliday junction (HJ) DNA during genetic recombination and DNA repair, while the RuvA-RuvB complex plays an important role in the rescue of blocked DNA replication forks via replication fork reversal (RFR). RuvA specifically binds to HJ cruciform DNA, conferring on it an open structure. The RuvB hexamer acts as an ATP-dependent pump, pulling dsDNA into and through the RuvAB complex. RuvB forms 2 homohexamers on either side of HJ DNA bound by 1 or 2 RuvA tetramers; 4 subunits per hexamer contact DNA at a time. Coordinated motions by a converter formed by DNA-disengaged RuvB subunits stimulates ATP hydrolysis and nucleotide exchange. Immobilization of the converter enables RuvB to convert the ATP-contained energy into a lever motion, pulling 2 nucleotides of DNA out of the RuvA tetramer per ATP hydrolyzed, thus driving DNA branch migration. The RuvB motors rotate together with the DNA substrate, which together with the progressing nucleotide cycle form the mechanistic basis for DNA recombination by continuous HJ branch migration. Branch migration allows RuvC to scan DNA until it finds its consensus sequence, where it cleaves and resolves cruciform DNA. The sequence is that of Holliday junction branch migration complex subunit RuvB from Shewanella oneidensis (strain ATCC 700550 / JCM 31522 / CIP 106686 / LMG 19005 / NCIMB 14063 / MR-1).